Consider the following 204-residue polypeptide: Apoptosis regulator R11 (204 aa).

Positions 101-120 (ELFRDGTNWGRIVAFFSFGR) match the BH1 motif. The BH2 motif lies at 152–167 (PWMQENGGWEAFVGLY). A helical membrane pass occupies residues 181-198 (RFGRLLTIVMLTGVFALV).

Belongs to the Bcl-2 family.

The protein resides in the membrane. Confers strong protection against cell death. This chain is Apoptosis regulator R11, found in Xenopus laevis (African clawed frog).